We begin with the raw amino-acid sequence, 418 residues long: Exodeoxyribonuclease 7 large subunit (418 aa).

Belongs to the XseA family. In terms of assembly, heterooligomer composed of large and small subunits.

It is found in the cytoplasm. It catalyses the reaction Exonucleolytic cleavage in either 5'- to 3'- or 3'- to 5'-direction to yield nucleoside 5'-phosphates.. Functionally, bidirectionally degrades single-stranded DNA into large acid-insoluble oligonucleotides, which are then degraded further into small acid-soluble oligonucleotides. The polypeptide is Exodeoxyribonuclease 7 large subunit (Acaryochloris marina (strain MBIC 11017)).